We begin with the raw amino-acid sequence, 437 residues long: Alpha-galactosidase 3 (437 aa).

Positions 1–30 are cleaved as a signal peptide; that stretch reads MVIMKKMKDSVLFLVVGLFSLSVLVSQSIA. 2 disulfides stabilise this stretch: C85-C117 and C165-C195. N-linked (GlcNAc...) asparagine glycosylation is present at N88. Substrate contacts are provided by residues 115–116 and K191; that span reads DD. The active-site Nucleophile is the D193. Residue N214 is glycosylated (N-linked (GlcNAc...) asparagine). Residues 226–230, R244, and D248 contribute to the substrate site; that span reads EWGVD. D248 functions as the Proton donor in the catalytic mechanism. N-linked (GlcNAc...) asparagine glycosylation is found at N250, N315, and N408.

It belongs to the glycosyl hydrolase 27 family. As to quaternary structure, homodimer.

The protein localises to the secreted. Its subcellular location is the cell wall. The protein resides in the extracellular space. It localises to the apoplast. It is found in the vacuole. It catalyses the reaction Hydrolysis of terminal, non-reducing alpha-D-galactose residues in alpha-D-galactosides, including galactose oligosaccharides, galactomannans and galactolipids.. Its function is as follows. May regulate leaf (and possibly other organ) development by functioning in cell wall loosening and cell wall expansion. In Arabidopsis thaliana (Mouse-ear cress), this protein is Alpha-galactosidase 3.